Consider the following 832-residue polypeptide: SID1 transmembrane family member 2 (832 aa).

Positions 1 to 15 are cleaved as a signal peptide; the sequence is MIAWRLPLCVLLVAA. Residues 16–293 lie on the Extracellular side of the membrane; that stretch reads VESHLGALGP…VSQAVTSEAY (278 aa). 6 N-linked (GlcNAc...) asparagine glycosylation sites follow: N27, N54, N60, N123, N141, and N165. A helical transmembrane segment spans residues 294 to 314; it reads VGGMLFCLGIFLSFYLLTVLL. The Cytoplasmic portion of the chain corresponds to 315–447; the sequence is ACWENWRQRK…DKRVLRKKYQ (133 aa). Phosphoserine occurs at positions 401, 403, and 404. Residues 448–468 form a helical membrane-spanning segment; that stretch reads IYFWNIATIAVFYALPVVQLV. The Extracellular segment spans residues 469–499; sequence ITYQTVVNVTGNQDICYYNFLCAHPLGNLSA. N476 and N496 each carry an N-linked (GlcNAc...) asparagine glycan. Residues 500–520 form a helical membrane-spanning segment; the sequence is FNNILSNLGYILLGLLFLLII. At 521–546 the chain is on the cytoplasmic side; it reads LQREINHNRALLRNDLYALECGIPKH. The chain crosses the membrane as a helical span at residues 547–567; it reads FGLFYAMGTALMMEGLLSACY. Residues 568-605 lie on the Extracellular side of the membrane; it reads HVCPNYTNFQFDTSFMYMIAGLCMLKLYQKRHPDINAS. 2 N-linked (GlcNAc...) asparagine glycosylation sites follow: N572 and N603. The helical transmembrane segment at 606-626 threads the bilayer; the sequence is AYSAYACLAIVIFFSVLGVVF. The Cytoplasmic portion of the chain corresponds to 627-631; the sequence is GKGNT. Residues 632 to 652 form a helical membrane-spanning segment; sequence AFWIVFSVIHIISTLLLSTQL. The Extracellular segment spans residues 653–688; that stretch reads YYMGRWKLDSGIFRRILHVLYTDCIRQCSGPLYTDR. The helical transmembrane segment at 689 to 709 threads the bilayer; it reads MVLLVMGNIINWSLAAYGLIM. The Cytoplasmic segment spans residues 710–715; it reads RPNDFA. Residues 716–736 traverse the membrane as a helical segment; it reads SYLLAIGICNLLLYFAFYIIM. Topologically, residues 737 to 746 are extracellular; the sequence is KLRSGERIKL. The chain crosses the membrane as a helical span at residues 747 to 767; that stretch reads IPLLCIVCTSVVWGFALFFFF. At 768–796 the chain is on the cytoplasmic side; the sequence is QGLSTWQKTPAESREHNRDCILLDFFDDH. The helical transmembrane segment at 797–817 threads the bilayer; sequence DIWHFLSSIAMFGSFLVLLTL. At 818-832 the chain is on the extracellular side; sequence DDDLDTVQRDKIYVF.

The protein belongs to the SID1 family. Interacts with adapter protein complex 1 (AP-1) and AP-2, but not AP-3 and AP-4. Interacts with LAMP2. In terms of processing, glycosylated. In terms of tissue distribution, highly expressed in the liver, brain, kidney and intestine (at protein level).

Its subcellular location is the lysosome membrane. It is found in the cell membrane. Functionally, mediates the translocation of RNA and DNA across the lysosomal membrane during RNA and DNA autophagy (RDA), a process in which RNA or DNA is directly imported into lysosomes in an ATP-dependent manner, and degraded. Involved in the uptake of single-stranded oligonucleotides by living cells, a process called gymnosis. In vitro, mediates the uptake of linear DNA more efficiently than that of circular DNA, but exhibits similar uptake efficacy toward RNA and DNA. Binds long double-stranded RNA (dsRNA) (500 - 700 base pairs), but not dsRNA shorter than 100 bp. This is SID1 transmembrane family member 2 (Sidt2) from Rattus norvegicus (Rat).